Reading from the N-terminus, the 181-residue chain is NADH-quinone oxidoreductase subunit I (181 aa).

2 4Fe-4S ferredoxin-type domains span residues 51–80 and 90–119; these read TRNSNGSERCVACNLCSAVCPVNCISLKKS and KSFQINLSRCIFCGLCEEACPTMAIQLTPD. Residues Cys60, Cys63, Cys66, Cys70, Cys99, Cys102, Cys105, and Cys109 each coordinate [4Fe-4S] cluster.

This sequence belongs to the complex I 23 kDa subunit family. In terms of assembly, NDH-1 is composed of 13 different subunits. Subunits NuoA, H, J, K, L, M, N constitute the membrane sector of the complex. [4Fe-4S] cluster is required as a cofactor.

It is found in the cell membrane. The enzyme catalyses a quinone + NADH + 5 H(+)(in) = a quinol + NAD(+) + 4 H(+)(out). Functionally, NDH-1 shuttles electrons from NADH, via FMN and iron-sulfur (Fe-S) centers, to quinones in the respiratory chain. The immediate electron acceptor for the enzyme in this species is believed to be ubiquinone. Couples the redox reaction to proton translocation (for every two electrons transferred, four hydrogen ions are translocated across the cytoplasmic membrane), and thus conserves the redox energy in a proton gradient. The chain is NADH-quinone oxidoreductase subunit I from Buchnera aphidicola subsp. Cinara cedri (strain Cc).